A 142-amino-acid polypeptide reads, in one-letter code: UPF0275 protein PM0505 (142 aa).

The protein belongs to the UPF0275 family.

This chain is UPF0275 protein PM0505, found in Pasteurella multocida (strain Pm70).